A 785-amino-acid polypeptide reads, in one-letter code: Endonuclease MutS2 (785 aa).

An ATP-binding site is contributed by 334-341 (GPNTGGKT). The Smr domain maps to 710–785 (LDLRGYNVED…GVGATIAELK (76 aa)).

It belongs to the DNA mismatch repair MutS family. MutS2 subfamily. As to quaternary structure, homodimer. Binds to stalled ribosomes, contacting rRNA.

Endonuclease that is involved in the suppression of homologous recombination and thus may have a key role in the control of bacterial genetic diversity. Functionally, acts as a ribosome collision sensor, splitting the ribosome into its 2 subunits. Detects stalled/collided 70S ribosomes which it binds and splits by an ATP-hydrolysis driven conformational change. Acts upstream of the ribosome quality control system (RQC), a ribosome-associated complex that mediates the extraction of incompletely synthesized nascent chains from stalled ribosomes and their subsequent degradation. Probably generates substrates for RQC. In Brevibacillus brevis (strain 47 / JCM 6285 / NBRC 100599), this protein is Endonuclease MutS2.